Consider the following 137-residue polypeptide: Nucleoside diphosphate kinase (137 aa).

ATP is bound by residues Lys-9, Phe-57, Arg-85, Thr-91, Arg-102, and Asn-112. Catalysis depends on His-115, which acts as the Pros-phosphohistidine intermediate.

Belongs to the NDK family. As to quaternary structure, homotetramer. Requires Mg(2+) as cofactor.

The protein localises to the cytoplasm. It catalyses the reaction a 2'-deoxyribonucleoside 5'-diphosphate + ATP = a 2'-deoxyribonucleoside 5'-triphosphate + ADP. The enzyme catalyses a ribonucleoside 5'-diphosphate + ATP = a ribonucleoside 5'-triphosphate + ADP. Functionally, major role in the synthesis of nucleoside triphosphates other than ATP. The ATP gamma phosphate is transferred to the NDP beta phosphate via a ping-pong mechanism, using a phosphorylated active-site intermediate. This chain is Nucleoside diphosphate kinase, found in Campylobacter concisus (strain 13826).